The chain runs to 190 residues: Protein LZIC (190 aa).

A coiled-coil region spans residues 6–64 (TTETSKLKQNLEEQLDRLMQQLQDLEECREELDADEYEETKKETLEQLSEINDSLKKIM).

This sequence belongs to the CTNNBIP1 family. As to quaternary structure, does not interact with CTNNB1.

In Gallus gallus (Chicken), this protein is Protein LZIC (LZIC).